Consider the following 198-residue polypeptide: Small ribosomal subunit protein uS2 (198 aa).

The protein belongs to the universal ribosomal protein uS2 family.

In Methanothermobacter thermautotrophicus (strain ATCC 29096 / DSM 1053 / JCM 10044 / NBRC 100330 / Delta H) (Methanobacterium thermoautotrophicum), this protein is Small ribosomal subunit protein uS2 (rps2).